We begin with the raw amino-acid sequence, 156 residues long: Ribosomal RNA large subunit methyltransferase H (156 aa).

S-adenosyl-L-methionine-binding positions include L73, G104, and 123-128; that span reads IGPLTL.

This sequence belongs to the RNA methyltransferase RlmH family. As to quaternary structure, homodimer.

It localises to the cytoplasm. It carries out the reaction pseudouridine(1915) in 23S rRNA + S-adenosyl-L-methionine = N(3)-methylpseudouridine(1915) in 23S rRNA + S-adenosyl-L-homocysteine + H(+). Functionally, specifically methylates the pseudouridine at position 1915 (m3Psi1915) in 23S rRNA. The polypeptide is Ribosomal RNA large subunit methyltransferase H (Xanthomonas campestris pv. campestris (strain 8004)).